We begin with the raw amino-acid sequence, 397 residues long: L-cysteine desulfidase (397 aa).

Catalysis depends on Cys-23, which acts as the Proton acceptor. [4Fe-4S] cluster contacts are provided by Cys-288, Cys-330, and Cys-337.

This sequence belongs to the L-cysteine desulfidase family. In terms of assembly, homotrimer. Requires [4Fe-4S] cluster as cofactor.

The enzyme catalyses L-cysteine + H2O = hydrogen sulfide + pyruvate + NH4(+) + H(+). Functionally, catalyzes the cleavage of L-cysteine to form 2-aminoprop-2-enoate and sulfide. The former then spontaneously hydrolyzes to pyruvate and NH(3). May be responsible for the production of sulfide required for the biosynthesis of iron-sulfur centers in this archaea. This Methanococcus maripaludis (strain C7 / ATCC BAA-1331) protein is L-cysteine desulfidase.